Consider the following 783-residue polypeptide: E3 UFM1-protein ligase 1 homolog (783 aa).

The interval 404–482 (SNSSANFDAD…AGSSRKSVKP (79 aa)) is disordered. A compositionally biased stretch (basic residues) spans 445–457 (KSTKKHQRGRAAA).

It belongs to the UFL1 family.

E3 UFM1-protein ligase that mediates ufmylation of target proteins. This chain is E3 UFM1-protein ligase 1 homolog, found in Drosophila mojavensis (Fruit fly).